A 210-amino-acid polypeptide reads, in one-letter code: Large ribosomal subunit protein bL25 (210 aa).

Residues 191–210 (KPAPKAAETDEDGEEAASEE) form a disordered region. Acidic residues predominate over residues 199–210 (TDEDGEEAASEE).

This sequence belongs to the bacterial ribosomal protein bL25 family. CTC subfamily. As to quaternary structure, part of the 50S ribosomal subunit; part of the 5S rRNA/L5/L18/L25 subcomplex. Contacts the 5S rRNA. Binds to the 5S rRNA independently of L5 and L18.

This is one of the proteins that binds to the 5S RNA in the ribosome where it forms part of the central protuberance. This is Large ribosomal subunit protein bL25 from Alteromonas mediterranea (strain DSM 17117 / CIP 110805 / LMG 28347 / Deep ecotype).